We begin with the raw amino-acid sequence, 309 residues long: Anamorsin homolog (309 aa).

Residues 4-169 (VSPGHSVLLL…SYEVGSSAQL (166 aa)) form an N-terminal SAM-like domain region. Residues 170–218 (TLSFAKKKQVEKPKLDENTAKIWSLSAVDMNDDDIDLLDPDELLDEEDL) form a linker region. [2Fe-2S] cluster-binding residues include cysteine 230, cysteine 242, cysteine 245, and cysteine 247. Residues 230 to 247 (CGTGGDTKKRKACKNCTC) are fe-S binding site A. Residues cysteine 270, cysteine 273, cysteine 281, and cysteine 284 each coordinate [4Fe-4S] cluster. Short sequence motifs (cx2C motif) lie at residues 270-273 (CGNC) and 281-284 (CASC). The fe-S binding site B stretch occupies residues 270–284 (CGNCYLGDAFRCASC).

This sequence belongs to the anamorsin family. Monomer. [2Fe-2S] cluster serves as cofactor. The cofactor is [4Fe-4S] cluster.

It localises to the cytoplasm. The protein localises to the mitochondrion intermembrane space. Component of the cytosolic iron-sulfur (Fe-S) protein assembly (CIA) machinery. Required for the maturation of extramitochondrial Fe-S proteins. Part of an electron transfer chain functioning in an early step of cytosolic Fe-S biogenesis, facilitating the de novo assembly of a [4Fe-4S] cluster on the cytosolic Fe-S scaffold complex. Electrons are transferred from NADPH via a FAD- and FMN-containing diflavin oxidoreductase. Together with the diflavin oxidoreductase, also required for the assembly of the diferric tyrosyl radical cofactor of ribonucleotide reductase (RNR), probably by providing electrons for reduction during radical cofactor maturation in the catalytic small subunit. The chain is Anamorsin homolog from Branchiostoma floridae (Florida lancelet).